We begin with the raw amino-acid sequence, 261 residues long: Cytochrome c oxidase subunit 3 (261 aa).

The Mitochondrial matrix segment spans residues 1–15; that stretch reads MAHQAHPYHMVDPSP. A helical membrane pass occupies residues 16–34; it reads WPLTGATAALLMTSGLAIW. Over 35-40 the chain is Mitochondrial intermembrane; the sequence is FHFHSL. Residues 41–66 form a helical membrane-spanning segment; sequence LLLYLGLTLLLLTMIQWWRDIIREGT. Residues 67-72 are Mitochondrial matrix-facing; that stretch reads FQGHHT. Residues 73–105 traverse the membrane as a helical segment; sequence PPVQKGLRYGMILFIVSEVFFFLGFFWAFYHSS. Topologically, residues 106–128 are mitochondrial intermembrane; it reads LAPTPELGGCWPPTGINPLDPFE. A helical membrane pass occupies residues 129 to 152; sequence VPLLNTAVLLASGVTVTWAHHGLM. Residues 153-155 are Mitochondrial matrix-facing; the sequence is EGN. The chain crosses the membrane as a helical span at residues 156–183; sequence RKEAIQALTLTIILGVYFTALQAMEYYE. Topologically, residues 184-190 are mitochondrial intermembrane; that stretch reads APFTIAD. The chain crosses the membrane as a helical span at residues 191 to 223; the sequence is GVYGTTFFVATGFHGLHVIIGSTFLAVCLLRQV. Residues 224 to 232 are Mitochondrial matrix-facing; that stretch reads LYHFTSEHH. The chain crosses the membrane as a helical span at residues 233 to 256; that stretch reads FGFEAAAWYWHFVDVVWLFLYVSI. Residues 257–261 lie on the Mitochondrial intermembrane side of the membrane; sequence YWWGS.

Belongs to the cytochrome c oxidase subunit 3 family. As to quaternary structure, component of the cytochrome c oxidase (complex IV, CIV), a multisubunit enzyme composed of 14 subunits. The complex is composed of a catalytic core of 3 subunits MT-CO1, MT-CO2 and MT-CO3, encoded in the mitochondrial DNA, and 11 supernumerary subunits COX4I, COX5A, COX5B, COX6A, COX6B, COX6C, COX7A, COX7B, COX7C, COX8 and NDUFA4, which are encoded in the nuclear genome. The complex exists as a monomer or a dimer and forms supercomplexes (SCs) in the inner mitochondrial membrane with NADH-ubiquinone oxidoreductase (complex I, CI) and ubiquinol-cytochrome c oxidoreductase (cytochrome b-c1 complex, complex III, CIII), resulting in different assemblies (supercomplex SCI(1)III(2)IV(1) and megacomplex MCI(2)III(2)IV(2)).

Its subcellular location is the mitochondrion inner membrane. It catalyses the reaction 4 Fe(II)-[cytochrome c] + O2 + 8 H(+)(in) = 4 Fe(III)-[cytochrome c] + 2 H2O + 4 H(+)(out). Its function is as follows. Component of the cytochrome c oxidase, the last enzyme in the mitochondrial electron transport chain which drives oxidative phosphorylation. The respiratory chain contains 3 multisubunit complexes succinate dehydrogenase (complex II, CII), ubiquinol-cytochrome c oxidoreductase (cytochrome b-c1 complex, complex III, CIII) and cytochrome c oxidase (complex IV, CIV), that cooperate to transfer electrons derived from NADH and succinate to molecular oxygen, creating an electrochemical gradient over the inner membrane that drives transmembrane transport and the ATP synthase. Cytochrome c oxidase is the component of the respiratory chain that catalyzes the reduction of oxygen to water. Electrons originating from reduced cytochrome c in the intermembrane space (IMS) are transferred via the dinuclear copper A center (CU(A)) of subunit 2 and heme A of subunit 1 to the active site in subunit 1, a binuclear center (BNC) formed by heme A3 and copper B (CU(B)). The BNC reduces molecular oxygen to 2 water molecules using 4 electrons from cytochrome c in the IMS and 4 protons from the mitochondrial matrix. The sequence is that of Cytochrome c oxidase subunit 3 (MT-CO3) from Scyliorhinus canicula (Small-spotted catshark).